A 483-amino-acid chain; its full sequence is Trigger factor (483 aa).

In terms of domain architecture, PPIase FKBP-type spans 166 to 251 (TDTVNIDYVG…INDVFTKEKP (86 aa)). Basic and acidic residues predominate over residues 435–460 (GEEPKLSTTKKVVEPTEEKTRKDSKM). The tract at residues 435 to 483 (GEEPKLSTTKKVVEPTEEKTRKDSKMSTKKPAAKPAAKPAAATKKPVKK) is disordered. The span at 467–483 (AKPAAKPAAATKKPVKK) shows a compositional bias: low complexity.

Belongs to the FKBP-type PPIase family. Tig subfamily.

It localises to the cytoplasm. The enzyme catalyses [protein]-peptidylproline (omega=180) = [protein]-peptidylproline (omega=0). Functionally, involved in protein export. Acts as a chaperone by maintaining the newly synthesized protein in an open conformation. Functions as a peptidyl-prolyl cis-trans isomerase. The protein is Trigger factor of Mycoplasma mobile (strain ATCC 43663 / 163K / NCTC 11711) (Mesomycoplasma mobile).